A 328-amino-acid chain; its full sequence is MADGDSGSERGGSSGGPSGFSQHMSREQETQELASKRLDIQNKRFYLDVKQNAKGRFIKIAEVGAGGSKSRLTLSMAVAAEFRDYLGDFIEHYAQLGPSSPEQIAQASGEDGAGGPGGPRRALKSEFLVRENRKYYLDLKENQRGRFLRIRQTINRGPGFSGGTGGGPGLQSGQTIALPAQGLIEFRDALAKLIDDYGGEDDEGMGLGSGASGGGAGGGGMYGELPEGTSITVDSKRFFFDVGSNKYGVFLRVSEVKPSYRNSITVPLKAWGKFGGAFCRYSEEMKEIQERQRDKMYDRRGPGERGGSLGPGAGGGGDDSETEDVDDD.

Disordered stretches follow at residues 1–35 (MADGDSGSERGGSSGGPSGFSQHMSREQETQELAS), 100–124 (SPEQIAQASGEDGAGGPGGPRRALK), and 289–328 (QERQRDKMYDRRGPGERGGSLGPGAGGGGDDSETEDVDDD). N-acetylalanine is present on Ala-2. Residues 9–18 (ERGGSSGGPS) show a composition bias toward gly residues. Residues 24 to 35 (MSREQETQELAS) show a composition bias toward basic and acidic residues. Residues 27–260 (EQETQELASK…LRVSEVKPSY (234 aa)) are DNA-binding. Residues 289 to 303 (QERQRDKMYDRRGPG) are compositionally biased toward basic and acidic residues. Positions 304–317 (ERGGSLGPGAGGGG) are enriched in gly residues. The segment covering 318 to 328 (DDSETEDVDDD) has biased composition (acidic residues).

This sequence belongs to the PUR DNA-binding protein family.

The protein localises to the nucleus. Its function is as follows. Transcriptional regulator which can act as an activator or a repressor. The protein is Transcriptional regulator protein Pur-beta-B (purb-b) of Xenopus laevis (African clawed frog).